We begin with the raw amino-acid sequence, 89 residues long: Small ribosomal subunit protein bS20 (89 aa).

It belongs to the bacterial ribosomal protein bS20 family.

Binds directly to 16S ribosomal RNA. This Stenotrophomonas maltophilia (strain R551-3) protein is Small ribosomal subunit protein bS20.